The sequence spans 58 residues: Proteinase inhibitor PSKP-1 (58 aa).

A Kazal-like domain is found at 1–58; the sequence is VIEPKCYKYEGKKCPPDINPVCGTDKRTYYNECALCVFIRQSTKKADKAIKIKKWGKC. Intrachain disulfides connect cysteine 6-cysteine 36, cysteine 14-cysteine 33, and cysteine 22-cysteine 58.

As to quaternary structure, monomer. Skin.

The protein localises to the secreted. Functionally, has antibacterial activity against Gram-negative bacterium E.coli ATCC 11229. Shows hemagglutinating activity. Inhibits prolyl endopeptidase, but not trypsin, chymotrypsin, V8 protease and proteinase K. May have a role in mucosal defense against microbes by interacting directly with their membranes. The sequence is that of Proteinase inhibitor PSKP-1 from Phyllomedusa sauvagei (Sauvage's leaf frog).